A 455-amino-acid polypeptide reads, in one-letter code: Aminopeptidase YwaD (455 aa).

Residues 1 to 31 form the signal peptide; the sequence is MKKLLTVMTMAVLTAGTLLLPAQSVTPAAHA. Zn(2+) contacts are provided by H250, D262, E295, D323, and H401.

It belongs to the peptidase M28 family. M28B subfamily. In terms of assembly, monomer. The cofactor is Zn(2+).

The protein resides in the secreted. The enzyme catalyses Release of N-terminal Arg and Lys from oligopeptides when P1' is not Pro. Also acts on arylamides of Arg and Lys.. It carries out the reaction Release of an N-terminal amino acid, preferentially leucine, but not glutamic or aspartic acids.. Functionally, catalyzes the hydrolysis of a range of N-terminal amino acids. The sequence is that of Aminopeptidase YwaD (ywaD) from Bacillus subtilis (strain 168).